Here is a 133-residue protein sequence, read N- to C-terminus: ATP synthase epsilon chain (133 aa).

Belongs to the ATPase epsilon chain family. As to quaternary structure, F-type ATPases have 2 components, CF(1) - the catalytic core - and CF(0) - the membrane proton channel. CF(1) has five subunits: alpha(3), beta(3), gamma(1), delta(1), epsilon(1). CF(0) has three main subunits: a, b and c.

Its subcellular location is the cell membrane. In terms of biological role, produces ATP from ADP in the presence of a proton gradient across the membrane. The polypeptide is ATP synthase epsilon chain (atpC) (Mycoplasma genitalium (strain ATCC 33530 / DSM 19775 / NCTC 10195 / G37) (Mycoplasmoides genitalium)).